The sequence spans 235 residues: Sugar fermentation stimulation protein homolog (235 aa).

Belongs to the SfsA family.

The sequence is that of Sugar fermentation stimulation protein homolog from Serratia proteamaculans (strain 568).